A 295-amino-acid polypeptide reads, in one-letter code: Farnesyl diphosphate synthase (295 aa).

3 residues coordinate isopentenyl diphosphate: K46, R49, and H78. Mg(2+) is bound by residues D85 and D91. Residue R96 participates in (2E)-geranyl diphosphate binding. An isopentenyl diphosphate-binding site is contributed by R97. Positions 180, 181, 220, and 237 each coordinate (2E)-geranyl diphosphate.

This sequence belongs to the FPP/GGPP synthase family. Mg(2+) is required as a cofactor.

Its subcellular location is the cytoplasm. It carries out the reaction isopentenyl diphosphate + (2E)-geranyl diphosphate = (2E,6E)-farnesyl diphosphate + diphosphate. The chain is Farnesyl diphosphate synthase (ispA) from Haemophilus influenzae (strain ATCC 51907 / DSM 11121 / KW20 / Rd).